Consider the following 425-residue polypeptide: Neuromedin-U receptor 1 (425 aa).

Residues Met-1–Gln-59 lie on the Extracellular side of the membrane. N-linked (GlcNAc...) asparagine glycosylation is present at Asn-41. A helical transmembrane segment spans residues Phe-60–Leu-80. Residues Thr-81–Asn-96 are Cytoplasmic-facing. Residues Phe-97 to Glu-117 form a helical membrane-spanning segment. Topologically, residues Leu-118–Arg-137 are extracellular. Cys-134 and Cys-219 are joined by a disulfide. The helical transmembrane segment at Ile-138 to Glu-158 threads the bilayer. The Cytoplasmic segment spans residues Arg-159–Met-181. Residues Leu-182 to Leu-202 traverse the membrane as a helical segment. Residues Ser-203–Thr-235 are Extracellular-facing. The helical transmembrane segment at Ile-236–Leu-256 threads the bilayer. Residues Arg-257–Gln-294 lie on the Cytoplasmic side of the membrane. The chain crosses the membrane as a helical span at residues Val-295–Ala-315. Residues Asp-316 to Arg-331 are Extracellular-facing. The helical transmembrane segment at Leu-332–Asn-352 threads the bilayer. At Pro-353 to Glu-425 the chain is on the cytoplasmic side. The segment at Asp-406–Glu-425 is disordered.

Belongs to the G-protein coupled receptor 1 family. In terms of tissue distribution, highly expressed in the small intestine and lung. Low expression in the central nervous system.

It is found in the cell membrane. In terms of biological role, receptor for the neuromedin-U and neuromedin-S neuropeptides. This Rattus norvegicus (Rat) protein is Neuromedin-U receptor 1 (Nmur1).